The chain runs to 580 residues: Isocitrate lyase (580 aa).

Residue 106-108 (SGW) participates in substrate binding. Asp177 contributes to the Mg(2+) binding site. Residue Cys215 is the Proton acceptor of the active site. Substrate is bound by residues 216 to 217 (GH), Arg252, 441 to 445 (NLSPS), and Thr476. The short motif at 578-580 (SRM) is the Microbody targeting signal element.

The protein belongs to the isocitrate lyase/PEP mutase superfamily. Isocitrate lyase family. As to quaternary structure, homotetramer. The cofactor is Mg(2+).

Its subcellular location is the glyoxysome. The catalysed reaction is D-threo-isocitrate = glyoxylate + succinate. Its pathway is carbohydrate metabolism; glyoxylate cycle; (S)-malate from isocitrate: step 1/2. Its function is as follows. Involved in storage lipid mobilization during the growth of higher plant seedling. This chain is Isocitrate lyase (ICL 8), found in Pinus taeda (Loblolly pine).